The primary structure comprises 161 residues: Regulator of ribonuclease activity A (161 aa).

This sequence belongs to the RraA family. Homotrimer. Binds to both RNA-binding sites in the C-terminal region of Rne and to RhlB.

The protein localises to the cytoplasm. Functionally, globally modulates RNA abundance by binding to RNase E (Rne) and regulating its endonucleolytic activity. Can modulate Rne action in a substrate-dependent manner by altering the composition of the degradosome. Modulates RNA-binding and helicase activities of the degradosome. This chain is Regulator of ribonuclease activity A, found in Tolumonas auensis (strain DSM 9187 / NBRC 110442 / TA 4).